We begin with the raw amino-acid sequence, 187 residues long: MSEEFELDTDDLKRRMDGAMANLKTEFASLRTGRASASMLEPVMVDAYGSMTPINQVGTVNVPEPRMVTINVWDKGLVGKVEKAIRESGLGINPQLNGTIIMLPIPELNEERRRELTKVAGQYAEHARVSIRNVRRDGMDQIKKAKADGMSEDDQKFWETEVQELTDKMIKAVDAALETKQAEIMQV.

It belongs to the RRF family.

It localises to the cytoplasm. In terms of biological role, responsible for the release of ribosomes from messenger RNA at the termination of protein biosynthesis. May increase the efficiency of translation by recycling ribosomes from one round of translation to another. The protein is Ribosome-recycling factor of Ruegeria sp. (strain TM1040) (Silicibacter sp.).